Here is a 240-residue protein sequence, read N- to C-terminus: Mannosyl-D-glycerate transport/metabolism system repressor MngR (240 aa).

An HTH gntR-type domain is found at Lys4–Glu72. The segment at residues Glu32–Arg51 is a DNA-binding region (H-T-H motif).

Represses mngA and mngB. Regulates its own expression. This chain is Mannosyl-D-glycerate transport/metabolism system repressor MngR (mngR), found in Escherichia coli (strain K12).